The primary structure comprises 236 residues: uncharacterized protein (236 aa).

An HTH gntR-type domain is found at Gln5–Pro73. Positions Glu33–Leu52 form a DNA-binding region, H-T-H motif.

This is an uncharacterized protein from Escherichia coli O157:H7.